Reading from the N-terminus, the 65-residue chain is Precursor peptide TigB (65 aa).

TIGSVS motif repeat units lie at residues 16–21 (TIGSVS), 23–28 (TIGSVS), 33–38 (TIGSVS), 40–45 (TIGSVS), 47–52 (TIGSVS), and 54–59 (TIGSVS). Residues Ile17, Ile24, Ile34, Ile41, Ile48, and Ile55 each carry the methylcyclopropylglycine modification.

Is subject to maturation by TigE, that catalyzes the formation of methylcyclopropylglycine (mCPG) residues from isoleucine residues residing in the repeating TIGSVS motifs.

Precursor peptide which undergoes post-translational modifications by tailoring enzymes, leading to the mature natural product. This Paramaledivibacter caminithermalis (strain DSM 15212 / CIP 107654 / DViRD3) (Clostridium caminithermale) protein is Precursor peptide TigB.